We begin with the raw amino-acid sequence, 202 residues long: Adapter protein MecA 2 (202 aa).

Belongs to the MecA family. In terms of assembly, homodimer.

In terms of biological role, enables the recognition and targeting of unfolded and aggregated proteins to the ClpC protease or to other proteins involved in proteolysis. Acts negatively in the development of competence by binding ComK and recruiting it to the ClpCP protease. When overexpressed, inhibits sporulation. Also involved in Spx degradation by ClpC. The polypeptide is Adapter protein MecA 2 (mecA2) (Bacillus anthracis).